We begin with the raw amino-acid sequence, 671 residues long: Receptor-interacting serine/threonine-protein kinase 1 (671 aa).

A Phosphoserine; by IKKA and IKKB modification is found at Ser-6. The region spanning 17-289 (FLESAELDSG…GIEEKFRPFY (273 aa)) is the Protein kinase domain. Residue Ser-20 is modified to Phosphoserine; by autocatalysis. ATP contacts are provided by residues 23–31 (LDSGGFGKV) and Lys-45. Ser-25 is subject to Phosphoserine; by IKKA and IKKB. The active-site Proton acceptor is the Asp-138. Phosphoserine; by RIPK3 and autocatalysis is present on Ser-161. Position 166 is a phosphoserine; by autocatalysis (Ser-166). The interaction with SQSTM1 stretch occupies residues 290-582 (LSQLEESVEE…QAIFDNTTSL (293 aa)). At Ser-303 the chain carries Phosphoserine. Ser-320, Ser-331, and Ser-333 each carry phosphoserine; by MAP3K7. The span at 331–348 (SRSNSATEQPGSLHSSQG) shows a compositional bias: polar residues. Residues 331–354 (SRSNSATEQPGSLHSSQGLGMGPV) form a disordered region. Lys-377 is covalently cross-linked (Glycyl lysine isopeptide (Lys-Gly) (interchain with G-Cter in ubiquitin)). Residue Tyr-384 is modified to Phosphotyrosine. The interval 389 to 455 (SRMDRQTKQQ…GNAVHQPSGL (67 aa)) is disordered. A compositionally biased stretch (polar residues) spans 428–444 (NFQNTEGKGTAYSSAAS). The RIP homotypic interaction motif (RHIM) motif lies at 531–547 (YTIYNSTGIQIGAYNYM). Positions 583 to 669 (TDKHLDPIRE…DLLSSLIYVS (87 aa)) constitute a Death domain. Residue Arg-603 is glycosylated ((Microbial infection) N-beta-linked (GlcNAc) arginine).

It belongs to the protein kinase superfamily. TKL Ser/Thr protein kinase family. In terms of assembly, homodimer. Interacts (via RIP homotypic interaction motif) with RIPK3 (via RIP homotypic interaction motif); this interaction induces RIPK1 phosphorylation and formation of a RIPK1-RIPK3 necroptosis-inducing complex. Upon TNF-induced necrosis, the RIPK1-RIPK3 dimer further interacts with PGAM5 and MLKL; the formation of this complex leads to PGAM5 phosphorylation and increase in PGAM5 phosphatase activity. Interacts (via the death domain) with TNFRSF6 (via the death domain) and TRADD (via the death domain). Is recruited by TRADD to TNFRSF1A in a TNF-dependent process. Binds RNF216, EGFR, IKBKG, TRAF1, TRAF2 and TRAF3. Interacts with BNLF1. Interacts with SQSTM1 upon TNF-alpha stimulation. May interact with MAVS/IPS1. Interacts with ZFAND5. Interacts with RBCK1. Interacts with ZBP1. Interacts with BIRC2/c-IAP1, BIRC3/c-IAP2 and XIAP/BIRC4. Interacts (via kinase domain) with DAB2IP (via Ras-GAP domain); the interaction occurs in a TNF-alpha-dependent manner. Interacts with ARHGEF2. Interacts (via protein kinase domain) with RFFL; involved in RIPK1 ubiquitination. Interacts with RNF34; involved in RIPK1 ubiquitination. Interacts with TICAM1 and this interaction is enhanced in the presence of WDFY1. Interacts with PELI1. Interacts (via death domain) with CRADD (via death domain); the interaction is direct. Component of complex IIa composed of at least RIPK1, FADD and CASP8. Component of the AIM2 PANoptosome complex, a multiprotein complex that drives inflammatory cell death (PANoptosis). Interacts with MAP3K7, CFLAR, CASP8, FADD and NEMO. Interacts with TAX1BP1; this interaction negatively regulates RIPK1 ubiquitination. Interacts with GRB2. Interacts with DDX24; this interaction disrupts RLR signaling activation of IFN-dependent transcription factor IRF7. (Microbial infection) Interacts with mumps virus protein SH; this interaction inhibits downstream NF-kappa-B pathway activation. As to quaternary structure, (Microbial infection) Interacts with Murid herpesvirus 1 protein RIR1. In terms of assembly, (Microbial infection) Interacts (via RIP homotypic interaction motif) with herpes simplex virus 1/HHV-1 protein RIR1/ICP6 (via RIP homotypic interaction motif); this interaction prevents necroptosis activation. (Microbial infection) Interacts (via RIP homotypic interaction motif) with herpes simplex virus 2/HHV-2 protein RIR1/ICP10 (via RIP homotypic interaction motif); this interaction prevents necroptosis activation. (Microbial infection) Proteolytically cleaved by S.flexneri OspD3 within the RIP homotypic interaction motif (RHIM), leading to its degradation and inhibition of necroptosis. Post-translationally, proteolytically cleaved by CASP8 at Asp-324. Cleavage is crucial for limiting TNF-induced apoptosis, necroptosis and inflammatory response. Cleavage abolishes NF-kappa-B activation and enhances the interaction of TRADD with FADD. Proteolytically cleaved by CASP6 during intrinsic apoptosis. In terms of processing, RIPK1 and RIPK3 undergo reciprocal auto- and trans-phosphorylation. Phosphorylation of Ser-161 by RIPK3 is necessary for the formation of the necroptosis-inducing complex. Phosphorylation at Ser-25 represses its kinase activity and consequently prevents TNF-mediated RIPK1-dependent cell death. Phosphorylated at Ser-320 by MAP3K7 which requires prior ubiquitination with 'Lys-63'-linked chains by BIRC2/c-IAP1 and BIRC3/c-IAP2. This phosphorylation positively regulates RIPK1 interaction with RIPK3 to promote necroptosis but negatively regulates RIPK1 kinase activity and its interaction with FADD to mediate apoptosis. Deubiquitinated by USP7; this modification is required for TNF-alpha-induced apoptosis. Post-translationally, ubiquitinated with 'Lys-11'-, 'Lys-48'-, 'Lys-63'- and linear-linked type ubiquitin. Polyubiquitination with 'Lys-63'-linked chains by TRAF2 induces association with the IKK complex. Deubiquitination of 'Lys-63'-linked chains and polyubiquitination with 'Lys-48'-linked chains by TNFAIP3 leads to RIPK1 proteasomal degradation and consequently down-regulates TNF-alpha-induced NF-kappa-B signaling. 'Lys-48'-linked polyubiquitination by RFFL or RNF34 also promotes proteasomal degradation and negatively regulates TNF-alpha-induced NF-kappa-B signaling. Linear polyubiquitinated; the head-to-tail linear polyubiquitination ('Met-1'-linked) is mediated by the LUBAC complex and decreases protein kinase activity. Deubiquitination of linear polyubiquitin by CYLD promotes the kinase activity. Polyubiquitinated with 'Lys-48' and 'Lys-63'-linked chains by BIRC2/c-IAP1 and BIRC3/c-IAP2, leading to activation of NF-kappa-B. Ubiquitinated with 'Lys-63'-linked chains by PELI1. Ubiquitination at Lys-377 with 'Lys-63'-linked chains by BIRC2/c-IAP1 and BIRC3/c-IAP2 is essential for its phosphorylation at Ser-320 mediated by MAP3K7. This ubiquitination is required for NF-kB activation, suppresses RIPK1 kinase activity and plays a critical role in preventing cell death during embryonic development. In terms of processing, (Microbial infection) Glycosylated at Arg-603 by enteropathogenic E.coli protein NleB1: arginine GlcNAcylation prevents homotypic/heterotypic death domain interactions.

The protein localises to the cytoplasm. It is found in the cell membrane. The enzyme catalyses L-seryl-[protein] + ATP = O-phospho-L-seryl-[protein] + ADP + H(+). The catalysed reaction is L-threonyl-[protein] + ATP = O-phospho-L-threonyl-[protein] + ADP + H(+). With respect to regulation, serine-threonine kinase activity is inhibited by linear polyubiquitination ('Met-1'-linked) by the LUBAC complex. Inhibited by necrostatins, including necrostatin-1, necrostatin-3 and necrostatin-4. In terms of biological role, serine-threonine kinase which is a key regulator of TNF-mediated apoptosis, necroptosis and inflammatory pathways. Exhibits kinase activity-dependent functions that regulate cell death and kinase-independent scaffold functions regulating inflammatory signaling and cell survival. Has kinase-independent scaffold functions: upon binding of TNF to TNFR1, RIPK1 is recruited to the TNF-R1 signaling complex (TNF-RSC also known as complex I) where it acts as a scaffold protein promoting cell survival, in part, by activating the canonical NF-kappa-B pathway. Kinase activity is essential to regulate necroptosis and apoptosis, two parallel forms of cell death: upon activation of its protein kinase activity, regulates assembly of two death-inducing complexes, namely complex IIa (RIPK1-FADD-CASP8), which drives apoptosis, and the complex IIb (RIPK1-RIPK3-MLKL), which drives necroptosis. RIPK1 is required to limit CASP8-dependent TNFR1-induced apoptosis. In normal conditions, RIPK1 acts as an inhibitor of RIPK3-dependent necroptosis, a process mediated by RIPK3 component of complex IIb, which catalyzes phosphorylation of MLKL upon induction by ZBP1. Inhibits RIPK3-mediated necroptosis via FADD-mediated recruitment of CASP8, which cleaves RIPK1 and limits TNF-induced necroptosis. Required to inhibit apoptosis and necroptosis during embryonic development: acts by preventing the interaction of TRADD with FADD thereby limiting aberrant activation of CASP8. In addition to apoptosis and necroptosis, also involved in inflammatory response by promoting transcriptional production of pro-inflammatory cytokines, such as interleukin-6 (IL6). Phosphorylates RIPK3: RIPK1 and RIPK3 undergo reciprocal auto- and trans-phosphorylation. Phosphorylates DAB2IP at 'Ser-728' in a TNF-alpha-dependent manner, and thereby activates the MAP3K5-JNK apoptotic cascade. Required for ZBP1-induced NF-kappa-B activation in response to DNA damage. The polypeptide is Receptor-interacting serine/threonine-protein kinase 1 (Homo sapiens (Human)).